The chain runs to 428 residues: Small ribosomal subunit protein uS2m (428 aa).

The tract at residues F30–A50 is disordered.

It belongs to the universal ribosomal protein uS2 family. As to quaternary structure, component of the mitochondrial small ribosomal subunit (mt-SSU). Mature N.crassa 74S mitochondrial ribosomes consist of a small (37S) and a large (54S) subunit. The 37S small subunit contains a 16S ribosomal RNA (16S mt-rRNA) and 32 different proteins. The 54S large subunit contains a 23S rRNA (23S mt-rRNA) and 42 different proteins.

The protein resides in the mitochondrion. Component of the mitochondrial ribosome (mitoribosome), a dedicated translation machinery responsible for the synthesis of mitochondrial genome-encoded proteins, including at least some of the essential transmembrane subunits of the mitochondrial respiratory chain. The mitoribosomes are attached to the mitochondrial inner membrane and translation products are cotranslationally integrated into the membrane. This chain is Small ribosomal subunit protein uS2m (mrp4), found in Neurospora crassa (strain ATCC 24698 / 74-OR23-1A / CBS 708.71 / DSM 1257 / FGSC 987).